The primary structure comprises 433 residues: Trigger factor (433 aa).

In terms of domain architecture, PPIase FKBP-type spans 161 to 246 (GKRVSIDFVG…VNKVEARELP (86 aa)).

Belongs to the FKBP-type PPIase family. Tig subfamily.

It localises to the cytoplasm. The enzyme catalyses [protein]-peptidylproline (omega=180) = [protein]-peptidylproline (omega=0). Functionally, involved in protein export. Acts as a chaperone by maintaining the newly synthesized protein in an open conformation. Functions as a peptidyl-prolyl cis-trans isomerase. The chain is Trigger factor from Vibrio cholerae serotype O1 (strain ATCC 39541 / Classical Ogawa 395 / O395).